The sequence spans 500 residues: NAD(P)H-quinone oxidoreductase chain 4, chloroplastic (500 aa).

A run of 14 helical transmembrane segments spans residues 4–24, 37–57, 87–107, 113–130, 134–154, 167–187, 208–228, 242–262, 272–292, 305–325, 330–350, 386–406, 416–436, and 462–482; these read FPWLTIIVLFPISAGSFIFFL, IGICLLELLLITYAFCYFFQL, IGPILLTGFITTLATLAAWPV, LFHFLMLAMYSGQIGLFS, LLLFFIMWELELIPVYLLLSM, FILYTAGGSIFLLMGVLGMGL, ALEILFYFGFLIAYAVKLPII, HYSTCMLLAGILLKMGAYGLI, AHSIFSPWLMIVGTVQIIYAA, IAYSSVSHMGFIIIGICSITD, GAVLQIISHGFIGAALFFLAG, LALPGMSGFVAELIVFFGIIT, VLITFVMAIGIILTPIYSLSM, and LFISICILLPVIGIGIYPDFV.

It belongs to the complex I subunit 4 family.

The protein localises to the plastid. It localises to the chloroplast thylakoid membrane. The catalysed reaction is a plastoquinone + NADH + (n+1) H(+)(in) = a plastoquinol + NAD(+) + n H(+)(out). It catalyses the reaction a plastoquinone + NADPH + (n+1) H(+)(in) = a plastoquinol + NADP(+) + n H(+)(out). This Ceratophyllum demersum (Rigid hornwort) protein is NAD(P)H-quinone oxidoreductase chain 4, chloroplastic.